We begin with the raw amino-acid sequence, 400 residues long: Nicotinate phosphoribosyltransferase (400 aa).

Histidine 220 carries the post-translational modification Phosphohistidine; by autocatalysis.

This sequence belongs to the NAPRTase family. Post-translationally, transiently phosphorylated on a His residue during the reaction cycle. Phosphorylation strongly increases the affinity for substrates and increases the rate of nicotinate D-ribonucleotide production. Dephosphorylation regenerates the low-affinity form of the enzyme, leading to product release.

It catalyses the reaction nicotinate + 5-phospho-alpha-D-ribose 1-diphosphate + ATP + H2O = nicotinate beta-D-ribonucleotide + ADP + phosphate + diphosphate. It functions in the pathway cofactor biosynthesis; NAD(+) biosynthesis; nicotinate D-ribonucleotide from nicotinate: step 1/1. Its function is as follows. Catalyzes the synthesis of beta-nicotinate D-ribonucleotide from nicotinate and 5-phospho-D-ribose 1-phosphate at the expense of ATP. The chain is Nicotinate phosphoribosyltransferase from Shigella boydii serotype 18 (strain CDC 3083-94 / BS512).